The primary structure comprises 245 residues: MRVGVLGAKGKVGATMVSAVESAADLTLSAEVDAGDPLSTLTETNTEAVIDFTHPDVVMGNLEFLIDNGIHAVVGTTGFTAERVEQVQSWLAKKPSTAVLIAPNFAIGAVLSMHFAKQAAPFFDSAEIIELHHPQKADAPSGTATRTAKLIAEAREGLAPNPDATSTSLPGARGADVDGIPVHAVRLAGLVAHQEVLFGTQGETLTIRHDSLDRTSFVPGVLLAVRRVRERPGLTIGIEPLLNLQ.

NAD(+)-binding positions include 7–12 (GAKGKV), 75–77 (GTT), and 102–105 (APNF). His132 acts as the Proton donor/acceptor in catalysis. His133 contacts (S)-2,3,4,5-tetrahydrodipicolinate. Lys136 serves as the catalytic Proton donor. A (S)-2,3,4,5-tetrahydrodipicolinate-binding site is contributed by 142 to 143 (GT).

It belongs to the DapB family.

The protein resides in the cytoplasm. It carries out the reaction (S)-2,3,4,5-tetrahydrodipicolinate + NAD(+) + H2O = (2S,4S)-4-hydroxy-2,3,4,5-tetrahydrodipicolinate + NADH + H(+). It catalyses the reaction (S)-2,3,4,5-tetrahydrodipicolinate + NADP(+) + H2O = (2S,4S)-4-hydroxy-2,3,4,5-tetrahydrodipicolinate + NADPH + H(+). Its pathway is amino-acid biosynthesis; L-lysine biosynthesis via DAP pathway; (S)-tetrahydrodipicolinate from L-aspartate: step 4/4. In terms of biological role, catalyzes the conversion of 4-hydroxy-tetrahydrodipicolinate (HTPA) to tetrahydrodipicolinate. This chain is 4-hydroxy-tetrahydrodipicolinate reductase, found in Mycobacterium marinum (strain ATCC BAA-535 / M).